The sequence spans 134 residues: MSWQAYVDDHLMCDIEDHEGHRLTAAAIVGHDGSVWAQSATFPQFKPEEMNGIMTDFNEPGHLAPTGLHLGGTKYMVIQGEAGAVIRGKKGSGGITIKKTGQALVFGIYEEPVTPGQCNMVVKRLGDYLLEQGL.

A disulfide bridge links Cys13 with Cys118. The short motif at 84-100 is the Involved in PIP2 interaction element; sequence AVIRGKKGSGGITIKKT. Thr114 is subject to Phosphothreonine.

It belongs to the profilin family. As to quaternary structure, occurs in many kinds of cells as a complex with monomeric actin in a 1:1 ratio. In terms of processing, phosphorylated by MAP kinases.

The protein localises to the cytoplasm. It localises to the cytoskeleton. Binds to actin and affects the structure of the cytoskeleton. At high concentrations, profilin prevents the polymerization of actin, whereas it enhances it at low concentrations. The polypeptide is Profilin-2 (Olea europaea (Common olive)).